Here is a 1584-residue protein sequence, read N- to C-terminus: Kinesin-like protein unc-104 (1584 aa).

In terms of domain architecture, Kinesin motor spans 3–347 (SVKVAVRVRP…LRYADRAKQI (345 aa)). 93-100 (GQTGSGKS) is a binding site for ATP. The interval 183–335 (VCSYHDICNL…PADINFDETL (153 aa)) is microtubule-binding. Coiled-coil stretches lie at residues 425-445 (EQKL…LRDM), 598-652 (IDLK…SYIS), and 777-797 (SIEK…TDAE). The disordered stretch occupies residues 1366 to 1416 (IPMNKDPPTGNKAQELSDESGSNSITSPVSDKSLIKSSRSSDLLCRQKSKS). Residues 1376–1394 (NKAQELSDESGSNSITSPV) show a composition bias toward polar residues. The segment covering 1395–1409 (SDKSLIKSSRSSDLL) has biased composition (low complexity). The PH domain occupies 1460 to 1558 (VVSKKGYMNF…WLYAINPLMA (99 aa)).

Belongs to the TRAFAC class myosin-kinesin ATPase superfamily. Kinesin family. Unc-104 subfamily. Interacts with casy-1. Expressed in nerve ring, amphid commissure and ventral nerve cord (at protein level).

The protein resides in the cytoplasm. Its subcellular location is the cytoskeleton. It is found in the cell projection. It localises to the axon. Motor protein involved in microtubule-associated anterograde transport. Regulates the transport of synaptic vesicle precursors in the axon of DA motor neurons. Regulates the polarized sorting of axonal proteins. Essential for the transport of synaptic components during the synaptic remodeling of the DD motor neuron, probably downstream of cdk-5 and/or pct-1/cyy-1 complex. Required for the anterograde transport of neuropeptide-containing dense core vesicles along axons. Involved in necrotic cell death. This is Kinesin-like protein unc-104 (unc-104) from Caenorhabditis elegans.